The chain runs to 99 residues: MTKADIIESVYEKVGFSKKEAAEIVEMVFDTIKETLERGEKIKISGFGNFIVREKKSRVGRNPQTGEEIEISARRVLTFRPSQVLKNALNLSDMVQPPV.

It belongs to the bacterial histone-like protein family. In terms of assembly, heterodimer of an alpha and a beta chain.

This protein is one of the two subunits of integration host factor, a specific DNA-binding protein that functions in genetic recombination as well as in transcriptional and translational control. In Anaeromyxobacter sp. (strain Fw109-5), this protein is Integration host factor subunit alpha.